Here is an 82-residue protein sequence, read N- to C-terminus: uncharacterized protein (82 aa).

The next 2 membrane-spanning stretches (helical) occupy residues 32-52 (PFSIALDLVSGTMVGLLIGIL) and 59-79 (SKPLFLIIFTIIGMIAGFNII).

It is found in the cell membrane. This is an uncharacterized protein from Rickettsia prowazekii (strain Madrid E).